We begin with the raw amino-acid sequence, 685 residues long: Potassium-transporting ATPase ATP-binding subunit (685 aa).

4 helical membrane passes run Met-36–Phe-56, Leu-68–Ala-88, Ile-218–Leu-238, and Ile-255–Ile-275. Asp-306 acts as the 4-aspartylphosphate intermediate in catalysis. ATP contacts are provided by residues Asp-343, Glu-347, Phe-375–Ser-382, and Lys-394. Mg(2+)-binding residues include Asp-517 and Asp-521. Helical transmembrane passes span Phe-587–Met-607, Ala-615–Met-635, and Ile-654–Ile-674.

This sequence belongs to the cation transport ATPase (P-type) (TC 3.A.3) family. Type IA subfamily. In terms of assembly, the system is composed of three essential subunits: KdpA, KdpB and KdpC.

It localises to the cell membrane. It carries out the reaction K(+)(out) + ATP + H2O = K(+)(in) + ADP + phosphate + H(+). Part of the high-affinity ATP-driven potassium transport (or Kdp) system, which catalyzes the hydrolysis of ATP coupled with the electrogenic transport of potassium into the cytoplasm. This subunit is responsible for energy coupling to the transport system and for the release of the potassium ions to the cytoplasm. In Clostridium acetobutylicum (strain ATCC 824 / DSM 792 / JCM 1419 / IAM 19013 / LMG 5710 / NBRC 13948 / NRRL B-527 / VKM B-1787 / 2291 / W), this protein is Potassium-transporting ATPase ATP-binding subunit.